A 128-amino-acid chain; its full sequence is Large-conductance mechanosensitive channel (128 aa).

Helical transmembrane passes span 10-30 (FAMR…SAFG) and 76-96 (GLFI…FMMI).

The protein belongs to the MscL family. In terms of assembly, homopentamer.

The protein localises to the cell inner membrane. Channel that opens in response to stretch forces in the membrane lipid bilayer. May participate in the regulation of osmotic pressure changes within the cell. In Haemophilus influenzae (strain 86-028NP), this protein is Large-conductance mechanosensitive channel.